A 717-amino-acid polypeptide reads, in one-letter code: Polyribonucleotide nucleotidyltransferase (717 aa).

Aspartate 486 and aspartate 492 together coordinate Mg(2+). The KH domain maps to 553 to 612; the sequence is PKIVQLQIDIDKISLVIGSTGKTVKAITDEFEVRVQIEQDGRITLFGTDSLKMQKAKAKI. In terms of domain architecture, S1 motif spans 622–715; the sequence is GEIYDGIVKK…KFGKIELELV (94 aa). A disordered region spans residues 659-689; it reads RYGDMRHSRYGSGRHSRYGRDNRNTFGMNPP. Over residues 666-675 the composition is skewed to basic residues; that stretch reads SRYGSGRHSR.

The protein belongs to the polyribonucleotide nucleotidyltransferase family. Mg(2+) serves as cofactor.

It is found in the cytoplasm. It carries out the reaction RNA(n+1) + phosphate = RNA(n) + a ribonucleoside 5'-diphosphate. Its function is as follows. Involved in mRNA degradation. Catalyzes the phosphorolysis of single-stranded polyribonucleotides processively in the 3'- to 5'-direction. This Borrelia hermsii (strain HS1 / DAH) protein is Polyribonucleotide nucleotidyltransferase.